The sequence spans 1226 residues: AF4/FMR2 family member 3 (1226 aa).

Residues 24 to 37 (RNALRRKERERRNQ) show a composition bias toward basic and acidic residues. Disordered regions lie at residues 24-65 (RNAL…GDEL), 116-164 (SRAQ…RATQ), 197-299 (ERPP…GETN), 323-496 (KVEP…SNQY), and 523-728 (IKST…SINA). Positions 42–52 (DDGTFNSSYSL) are enriched in polar residues. A compositionally biased stretch (low complexity) spans 123-132 (SSICSTTTST). 2 stretches are compositionally biased toward polar residues: residues 251 to 261 (LKSSSETSVHC) and 334 to 344 (KDSQLVSSGHN). Low complexity predominate over residues 381 to 392 (QQAAQRTALRAL). The span at 396 to 408 (AVVQQPNCRTSVP) shows a compositional bias: polar residues. Residues 409–445 (SSKGSSSSSSSGSSSSSSDSESSSGSDSETESSSSES) show a composition bias toward low complexity. The span at 485–496 (QNESHGSESNQY) shows a compositional bias: polar residues. Residues 523 to 533 (IKSTCKEEQRP) show a composition bias toward basic and acidic residues. 2 stretches are compositionally biased toward low complexity: residues 550-561 (PPAAVAVAVSAA) and 569-579 (CAPAENAPAPA). Residues 589-607 (RRTERTSAGDGANCHRPEE) show a composition bias toward basic and acidic residues. The segment covering 668-678 (TESSSSSSSSD) has biased composition (low complexity). Residues 692 to 705 (KAQTVAASASSGND) show a composition bias toward polar residues. S755 is subject to Phosphoserine. Disordered stretches follow at residues 783-856 (PQEP…LSAN), 879-964 (PISP…RDCK), and 1100-1138 (AAQA…SLSN). Residues 830 to 842 (REIKKSQGEKDSS) show a composition bias toward basic and acidic residues. Residues 843–856 (SRLATSTSNTLSAN) are compositionally biased toward polar residues. A Phosphoserine modification is found at S881. Residues 894-909 (EDLTSSSRPNGNSLFT) are compositionally biased toward polar residues.

This sequence belongs to the AF4 family. In terms of tissue distribution, preferentially expressed in lymphoid tissues, highest levels being found in the thymus.

The protein localises to the nucleus. Its function is as follows. Putative transcription activator that may function in lymphoid development and oncogenesis. Binds, in vitro, to double-stranded DNA. This is AF4/FMR2 family member 3 from Homo sapiens (Human).